A 310-amino-acid polypeptide reads, in one-letter code: MNIKLTLLVLISIINLMIIQPIQTLAFPIYAQQGYENPREATGRIVCANCHLAQKPIKIEAPKTVLPNSIFEAIVKIPYDTNNKQLLGNGIKGSINTGAVMILPEGFKLAPKNLLSEELREKTKNVYIQPYSTTKDNILLVGPLAGEKNQEIIFPILSPDPSKDKNIHFLKYPIYIGANRGRGQVYPTGDKSNNNPIVSLNTGKVTKIISLEKGGYKIEIEKDNGEIYTENIPQGLNLMVSQGSQVVANQNLTDDPNVGGFGQTEIEIVLQSPSRIKGMIVFFFTVTIAQIFFVLKKKQWEKVQAAEINF.

The N-terminal stretch at 1-26 is a signal peptide; the sequence is MNIKLTLLVLISIINLMIIQPIQTLA. Residues phenylalanine 27, cysteine 47, cysteine 50, and histidine 51 each contribute to the heme site. The chain crosses the membrane as a helical span at residues 276 to 296; sequence IKGMIVFFFTVTIAQIFFVLK.

Belongs to the cytochrome f family. As to quaternary structure, the 4 large subunits of the cytochrome b6-f complex are cytochrome b6, subunit IV (17 kDa polypeptide, petD), cytochrome f and the Rieske protein, while the 4 small subunits are PetG, PetL, PetM and PetN. The complex functions as a dimer. Heme serves as cofactor.

It is found in the plastid. The protein localises to the chloroplast thylakoid membrane. Its function is as follows. Component of the cytochrome b6-f complex, which mediates electron transfer between photosystem II (PSII) and photosystem I (PSI), cyclic electron flow around PSI, and state transitions. The chain is Cytochrome f from Gracilaria tenuistipitata var. liui (Red alga).